The sequence spans 834 residues: Glycerol-3-phosphate acyltransferase (834 aa).

The HXXXXD motif motif lies at 309–314; the sequence is CHRSHI.

Belongs to the GPAT/DAPAT family.

Its subcellular location is the cell inner membrane. The catalysed reaction is sn-glycerol 3-phosphate + an acyl-CoA = a 1-acyl-sn-glycero-3-phosphate + CoA. Its pathway is phospholipid metabolism; CDP-diacylglycerol biosynthesis; CDP-diacylglycerol from sn-glycerol 3-phosphate: step 1/3. The sequence is that of Glycerol-3-phosphate acyltransferase from Pseudomonas fluorescens (strain Pf0-1).